Here is a 145-residue protein sequence, read N- to C-terminus: Basic phospholipase A2 PC14 (145 aa).

The signal sequence occupies residues 1-21; that stretch reads MYPAHLLLLLAVCVSLLGASA. Residues 22–27 constitute a propeptide that is removed on maturation; that stretch reads IPPLPL. 7 cysteine pairs are disulfide-bonded: Cys38/Cys98, Cys54/Cys144, Cys56/Cys72, Cys71/Cys125, Cys78/Cys118, Cys87/Cys111, and Cys105/Cys116. Tyr55, Gly57, and Gly59 together coordinate Ca(2+). The active site involves His75. Asp76 contributes to the Ca(2+) binding site. Asp119 is an active-site residue.

The protein belongs to the phospholipase A2 family. Group I subfamily. D49 sub-subfamily. Ca(2+) serves as cofactor.

It localises to the secreted. It carries out the reaction a 1,2-diacyl-sn-glycero-3-phosphocholine + H2O = a 1-acyl-sn-glycero-3-phosphocholine + a fatty acid + H(+). Its function is as follows. PLA2 catalyzes the calcium-dependent hydrolysis of the 2-acyl groups in 3-sn-phosphoglycerides. This Laticauda laticaudata (Blue-ringed sea krait) protein is Basic phospholipase A2 PC14.